A 797-amino-acid polypeptide reads, in one-letter code: Short transient receptor potential channel 4-associated protein (797 aa).

N-acetylalanine is present on A2. The tract at residues 2–400 (AAAPVAAGSG…VLYVLCVLLM (399 aa)) is interaction with TNFRSF1A.

As to quaternary structure, component of the DCX(TRPC4AP) E3 ubiquitin ligase complex, at least composed of CUL4A, DDB1, TRPC4AP/TRUSS and RBX1. Interacts with MYC. Constitutively associated with TNFRSF1A. Directly interacts with TRADD, TRAF2, CHUK, IKBKB and IKBKG. Interacts with TRPC1, TRPC4 and TRPC5. (Microbial infection) Interacts with Hepatitis B virus (HBV) protein X; leading to prevent ubiquitination of TRPC4AP by SKP2. In terms of processing, phosphorylated by GSK3B; phosphorylation is required for ubiquitination. Post-translationally, ubiquitinated by a SCF (SKP1-CUL1-F-box protein) E3 ubiquitin-protein ligase containing SKP2, leading to its degradation. Phosphorylation by GSK3B is required for ubiquitination.

Its subcellular location is the cytoplasm. It is found in the perinuclear region. It functions in the pathway protein modification; protein ubiquitination. Its function is as follows. Substrate-recognition component of a DCX (DDB1-CUL4-X-box) E3 ubiquitin-protein ligase complex required for cell cycle control. The DCX(TRPC4AP) complex specifically mediates the polyubiquitination and subsequent degradation of MYC as part of the DesCEND (destruction via C-end degrons) pathway. The DesCEND (destruction via C-end degrons) pathway recognizes a C-degron located at the extreme C terminus of target proteins, leading to their ubiquitination and degradation. The DCX(TRPC4AP) complex specifically recognizes proteins with an arginine at the minus 3 position (R-3 motif) at the C-terminus, such as MYC, leading to their ubiquitination and degradation. Also participates in the activation of NFKB1 in response to ligation of TNFRSF1A, possibly by linking TNFRSF1A to the IKK signalosome. Involved in JNK activation via its interaction with TRAF2. Also involved in elevation of endoplasmic reticulum Ca(2+) storage reduction in response to CHRM1. This chain is Short transient receptor potential channel 4-associated protein, found in Homo sapiens (Human).